A 396-amino-acid chain; its full sequence is MQTFLKGKRVGYWMSEKKIKKLNFQAFADLCRKRGIEVVQLNLAKPIEDQGPLDVIIHKLTDVILEADQKDSESMQLVQRFQDYIEAHPETIILDPLPAIRTLLDRSKSYELIRRIETYMQDERICSPPFMELMAECDEDTLKILEKNGLAFPLVCKTRVAHGTNSHEMAIIFNPEGLWSIKPPCVIQSFISHNAVLYKVFVVGESYTVVERPSLKNFSLGASDRASIFFNSHNVSKPESSSVLTALEKVEGVFERPCDEVIRGISKALRQALGISLFGIDIIINNKTGQHAVIDINAFPGYEGVPEFFTDLLNHITTILQRPDQSANKSSVEQTGSSLGERLCCTPPARTDPWIVETDTSGSVKLQSQRLGCNSSVSPSFQQHCVASLATKASSQ.

Lysine 18 is a 1D-myo-inositol 1,3,4-trisphosphate binding site. ATP contacts are provided by arginine 106 and lysine 157. An ATP-grasp domain is found at 117 to 325 (ETYMQDERIC…ITTILQRPDQ (209 aa)). Positions 167 and 199 each coordinate 1D-myo-inositol 1,3,4-trisphosphate. ATP contacts are provided by residues 188 to 199 (QSFISHNAVLYK), serine 214, serine 232, and serine 236. The Mg(2+) site is built by aspartate 281, aspartate 295, and asparagine 297. Residue asparagine 297 participates in 1D-myo-inositol 1,3,4-trisphosphate binding.

It belongs to the ITPK1 family. In terms of assembly, monomer. The cofactor is Mg(2+).

It carries out the reaction 1D-myo-inositol 3,4,5,6-tetrakisphosphate + ATP = 1D-myo-inositol 1,3,4,5,6-pentakisphosphate + ADP + H(+). The enzyme catalyses 1D-myo-inositol 1,3,4-trisphosphate + ATP = 1D-myo-inositol 1,3,4,5-tetrakisphosphate + ADP + H(+). It catalyses the reaction 1D-myo-inositol 1,3,4-trisphosphate + ATP = 1D-myo-inositol 1,3,4,6-tetrakisphosphate + ADP + H(+). The catalysed reaction is 1D-myo-inositol 3,4,6-trisphosphate + ATP = 1D-myo-inositol 1,3,4,6-tetrakisphosphate + ADP + H(+). It carries out the reaction 1D-myo-inositol 1,3,4-trisphosphate + 1D-myo-inositol 1,3,4,5,6-pentakisphosphate = 1D-myo-inositol 3,4,5,6-tetrakisphosphate + 1D-myo-inositol 1,3,4,6-tetrakisphosphate. The enzyme catalyses 1D-myo-inositol 1,3,4-trisphosphate + 1D-myo-inositol 1,3,4,5,6-pentakisphosphate = 1D-myo-inositol 3,4,5,6-tetrakisphosphate + 1D-myo-inositol 1,3,4,5-tetrakisphosphate. Its function is as follows. Kinase that can phosphorylate various inositol polyphosphate such as Ins(3,4,5,6)P4 or Ins(1,3,4)P3. Phosphorylates Ins(3,4,5,6)P4 at position 1 to form Ins(1,3,4,5,6)P5. This reaction is thought to have regulatory importance, since Ins(3,4,5,6)P4 is an inhibitor of plasma membrane Ca(2+)-activated Cl(-) channels, while Ins(1,3,4,5,6)P5 is not. Also phosphorylates Ins(1,3,4)P3 on O-5 and O-6 to form Ins(1,3,4,6)P4, an essential molecule in the hexakisphosphate (InsP6) pathway. Also acts as an inositol polyphosphate phosphatase that dephosphorylates Ins(1,3,4,5)P4 and Ins(1,3,4,6)P4 to Ins(1,3,4)P3, and Ins(1,3,4,5,6)P5 to Ins(3,4,5,6)P4. May also act as an isomerase that interconverts the inositol tetrakisphosphate isomers Ins(1,3,4,5)P4 and Ins(1,3,4,6)P4 in the presence of ADP and magnesium. Probably acts as the rate-limiting enzyme of the InsP6 pathway. Modifies TNF-alpha-induced apoptosis by interfering with the activation of TNFRSF1A-associated death domain. Plays an important role in MLKL-mediated necroptosis. Produces highly phosphorylated inositol phosphates such as inositolhexakisphosphate (InsP6) which bind to MLKL mediating the release of an N-terminal auto-inhibitory region leading to its activation. Essential for activated phospho-MLKL to oligomerize and localize to the cell membrane during necroptosis. In Xenopus laevis (African clawed frog), this protein is Inositol-tetrakisphosphate 1-kinase (itpk1).